We begin with the raw amino-acid sequence, 586 residues long: Phosphomethylpyrimidine synthase (586 aa).

A disordered region spans residues Met-1 to Gly-58. The span at Val-22–Glu-39 shows a compositional bias: basic and acidic residues. Residues Asn-193, Met-222, Tyr-251, His-287, Ser-307–Gly-309, Asp-348–Arg-351, and Glu-387 contribute to the substrate site. Residue His-391 participates in Zn(2+) binding. Tyr-414 lines the substrate pocket. His-455 lines the Zn(2+) pocket. Positions 535, 538, and 543 each coordinate [4Fe-4S] cluster.

Belongs to the ThiC family. [4Fe-4S] cluster serves as cofactor.

It catalyses the reaction 5-amino-1-(5-phospho-beta-D-ribosyl)imidazole + S-adenosyl-L-methionine = 4-amino-2-methyl-5-(phosphooxymethyl)pyrimidine + CO + 5'-deoxyadenosine + formate + L-methionine + 3 H(+). It participates in cofactor biosynthesis; thiamine diphosphate biosynthesis. Its function is as follows. Catalyzes the synthesis of the hydroxymethylpyrimidine phosphate (HMP-P) moiety of thiamine from aminoimidazole ribotide (AIR) in a radical S-adenosyl-L-methionine (SAM)-dependent reaction. The protein is Phosphomethylpyrimidine synthase of Bacillus thuringiensis (strain Al Hakam).